A 198-amino-acid polypeptide reads, in one-letter code: Holliday junction branch migration complex subunit RuvA (198 aa).

The interval 1-64 (MYEYIKGKYI…EDFIGLYGFD (64 aa)) is domain I. Positions 65 to 143 (SKEELEMFKL…PDELVDSSLE (79 aa)) are domain II. The tract at residues 144–149 (IDTKDN) is flexible linker. Positions 150-198 (ENVMALSEALSALIALGYSEKEAESVLKKIDKNDSVENIIKNALKALMG) are domain III.

This sequence belongs to the RuvA family. Homotetramer. Forms an RuvA(8)-RuvB(12)-Holliday junction (HJ) complex. HJ DNA is sandwiched between 2 RuvA tetramers; dsDNA enters through RuvA and exits via RuvB. An RuvB hexamer assembles on each DNA strand where it exits the tetramer. Each RuvB hexamer is contacted by two RuvA subunits (via domain III) on 2 adjacent RuvB subunits; this complex drives branch migration. In the full resolvosome a probable DNA-RuvA(4)-RuvB(12)-RuvC(2) complex forms which resolves the HJ.

The protein localises to the cytoplasm. The RuvA-RuvB-RuvC complex processes Holliday junction (HJ) DNA during genetic recombination and DNA repair, while the RuvA-RuvB complex plays an important role in the rescue of blocked DNA replication forks via replication fork reversal (RFR). RuvA specifically binds to HJ cruciform DNA, conferring on it an open structure. The RuvB hexamer acts as an ATP-dependent pump, pulling dsDNA into and through the RuvAB complex. HJ branch migration allows RuvC to scan DNA until it finds its consensus sequence, where it cleaves and resolves the cruciform DNA. The sequence is that of Holliday junction branch migration complex subunit RuvA from Clostridium beijerinckii (strain ATCC 51743 / NCIMB 8052) (Clostridium acetobutylicum).